The sequence spans 526 residues: 2-succinyl-5-enolpyruvyl-6-hydroxy-3-cyclohexene-1-carboxylate synthase (526 aa).

This sequence belongs to the TPP enzyme family. MenD subfamily. Homodimer. Mg(2+) serves as cofactor. The cofactor is Mn(2+). Requires thiamine diphosphate as cofactor.

It catalyses the reaction isochorismate + 2-oxoglutarate + H(+) = 5-enolpyruvoyl-6-hydroxy-2-succinyl-cyclohex-3-ene-1-carboxylate + CO2. The protein operates within quinol/quinone metabolism; 1,4-dihydroxy-2-naphthoate biosynthesis; 1,4-dihydroxy-2-naphthoate from chorismate: step 2/7. It functions in the pathway quinol/quinone metabolism; menaquinone biosynthesis. Functionally, catalyzes the thiamine diphosphate-dependent decarboxylation of 2-oxoglutarate and the subsequent addition of the resulting succinic semialdehyde-thiamine pyrophosphate anion to isochorismate to yield 2-succinyl-5-enolpyruvyl-6-hydroxy-3-cyclohexene-1-carboxylate (SEPHCHC). This is 2-succinyl-5-enolpyruvyl-6-hydroxy-3-cyclohexene-1-carboxylate synthase from Bdellovibrio bacteriovorus (strain ATCC 15356 / DSM 50701 / NCIMB 9529 / HD100).